We begin with the raw amino-acid sequence, 232 residues long: Uracil-DNA glycosylase (232 aa).

Asp-70 functions as the Proton acceptor in the catalytic mechanism.

The protein belongs to the uracil-DNA glycosylase (UDG) superfamily. UNG family.

The protein resides in the cytoplasm. The catalysed reaction is Hydrolyzes single-stranded DNA or mismatched double-stranded DNA and polynucleotides, releasing free uracil.. Functionally, excises uracil residues from the DNA which can arise as a result of misincorporation of dUMP residues by DNA polymerase or due to deamination of cytosine. The chain is Uracil-DNA glycosylase from Campylobacter fetus subsp. fetus (strain 82-40).